A 447-amino-acid chain; its full sequence is SNF1-related protein kinase regulatory subunit gamma-1-like (447 aa).

Ala-2 bears the N-acetylalanine mark. At Ser-35 the chain carries Phosphoserine. 4 CBS domains span residues 54 to 120, 214 to 275, 292 to 350, and 374 to 433; these read QVPG…SAEL, SFRW…GRDW, MSPN…PEVF, and LAIP…PNYF.

It belongs to the 5'-AMP-activated protein kinase gamma subunit family. Subunit of a probable heterotrimeric complex consisting of an alpha catalytic (KIN10 or KIN11) subunit, and a beta (KINB) and a gamma (KING or SNF4) non-catalytic regulatory subunits.

In terms of biological role, regulatory subunit of the probable trimeric SNF1-related protein kinase (SnRK) complex, which may play a role in a signal transduction cascade regulating gene expression and carbohydrate metabolism in higher plants. The protein is SNF1-related protein kinase regulatory subunit gamma-1-like (CBSCBS2) of Arabidopsis thaliana (Mouse-ear cress).